A 339-amino-acid chain; its full sequence is Serine/threonine-protein kinase pdik1l-B (339 aa).

One can recognise a Protein kinase domain in the interval 8 to 332 (YDLIREVGRG…LELKLIQIAF (325 aa)). Residues 14-22 (VGRGSYGLV) and lysine 37 each bind ATP. Aspartate 164 acts as the Proton acceptor in catalysis.

The protein belongs to the protein kinase superfamily. Ser/Thr protein kinase family.

It is found in the nucleus. The catalysed reaction is L-seryl-[protein] + ATP = O-phospho-L-seryl-[protein] + ADP + H(+). The enzyme catalyses L-threonyl-[protein] + ATP = O-phospho-L-threonyl-[protein] + ADP + H(+). This chain is Serine/threonine-protein kinase pdik1l-B (pdik1-b), found in Xenopus laevis (African clawed frog).